The sequence spans 280 residues: Thymidylate synthase (280 aa).

DUMP is bound at residue Arg21. His51 contacts (6R)-5,10-methylene-5,6,7,8-tetrahydrofolate. Residue 142–143 coordinates dUMP; sequence RR. Cys162 functions as the Nucleophile in the catalytic mechanism. DUMP is bound by residues 182–185, Asn193, and 223–225; these read RSAD and HLY. Asp185 contributes to the (6R)-5,10-methylene-5,6,7,8-tetrahydrofolate binding site. Residue Ala279 participates in (6R)-5,10-methylene-5,6,7,8-tetrahydrofolate binding.

The protein belongs to the thymidylate synthase family. Bacterial-type ThyA subfamily. Homodimer.

It is found in the cytoplasm. It catalyses the reaction dUMP + (6R)-5,10-methylene-5,6,7,8-tetrahydrofolate = 7,8-dihydrofolate + dTMP. The protein operates within pyrimidine metabolism; dTTP biosynthesis. Functionally, catalyzes the reductive methylation of 2'-deoxyuridine-5'-monophosphate (dUMP) to 2'-deoxythymidine-5'-monophosphate (dTMP) while utilizing 5,10-methylenetetrahydrofolate (mTHF) as the methyl donor and reductant in the reaction, yielding dihydrofolate (DHF) as a by-product. This enzymatic reaction provides an intracellular de novo source of dTMP, an essential precursor for DNA biosynthesis. The chain is Thymidylate synthase from Acinetobacter baylyi (strain ATCC 33305 / BD413 / ADP1).